The sequence spans 327 residues: Probable cell division protein WhiA (327 aa).

Positions 277-310 (EELGRLADPPMTKDAVAGRIRRLLSMADRKAKQD) form a DNA-binding region, H-T-H motif. The segment at 304–327 (DRKAKQDGIPDTESAVTPDLLEDA) is disordered.

This sequence belongs to the WhiA family.

In terms of biological role, involved in cell division and chromosome segregation. The chain is Probable cell division protein WhiA from Mycolicibacterium vanbaalenii (strain DSM 7251 / JCM 13017 / BCRC 16820 / KCTC 9966 / NRRL B-24157 / PYR-1) (Mycobacterium vanbaalenii).